A 37-amino-acid polypeptide reads, in one-letter code: Esculentin-2B (37 aa).

Cys31 and Cys37 are disulfide-bonded.

It belongs to the frog skin active peptide (FSAP) family. Esculentin subfamily. Expressed by the skin glands.

It localises to the secreted. Functionally, shows antibacterial activity against representative Gram-negative and Gram-positive bacterial species, and hemolytic activity. The sequence is that of Esculentin-2B from Pelophylax lessonae (Pool frog).